A 220-amino-acid chain; its full sequence is Octanoyltransferase (220 aa).

The BPL/LPL catalytic domain maps to 27–208 (PGTADEIWLC…QLARAHGHAV (182 aa)). Substrate is bound by residues 66-73 (RGGQVTYH), 139-141 (ALG), and 152-154 (GLA). Catalysis depends on cysteine 170, which acts as the Acyl-thioester intermediate.

It belongs to the LipB family.

Its subcellular location is the cytoplasm. It carries out the reaction octanoyl-[ACP] + L-lysyl-[protein] = N(6)-octanoyl-L-lysyl-[protein] + holo-[ACP] + H(+). The protein operates within protein modification; protein lipoylation via endogenous pathway; protein N(6)-(lipoyl)lysine from octanoyl-[acyl-carrier-protein]: step 1/2. Functionally, catalyzes the transfer of endogenously produced octanoic acid from octanoyl-acyl-carrier-protein onto the lipoyl domains of lipoate-dependent enzymes. Lipoyl-ACP can also act as a substrate although octanoyl-ACP is likely to be the physiological substrate. The sequence is that of Octanoyltransferase from Bordetella parapertussis (strain 12822 / ATCC BAA-587 / NCTC 13253).